The following is a 447-amino-acid chain: Acyl-lipid (7-3)-desaturase (447 aa).

A Cytochrome b5 heme-binding domain is found at 36–94; it reads LTIVGDSVYDAKAFRSEHPGGAHFVSLFGGRDATEAFMEYHRRAWPKSRMSRFHVGSLA. Heme-binding residues include His53 and His76. Transmembrane regions (helical) follow at residues 123-143, 154-174, and 185-205; these read GFAP…AIAL, LLPS…IQHD, and SVNL…ILWL. A Histidine box-1 motif is present at residues 173–177; sequence HDANH. Positions 208–213 match the Histidine box-2 motif; it reads HVVMHH. Helical transmembrane passes span 244–264, 286–306, and 315–335; these read WLQH…LLFL, LFMP…ALPL, and AVCI…FFFI. Residues 386–390 carry the Histidine box-3 motif; it reads QIEHH.

It belongs to the fatty acid desaturase type 1 family. Requires Fe(2+) as cofactor.

The protein resides in the membrane. It catalyses the reaction a (7Z,10Z,13Z,16Z,19Z)-docosapentaenoyl-containing glycerolipid + 2 Fe(II)-[cytochrome b5] + O2 + 2 H(+) = a (4Z,7Z,10Z,13Z,16Z,19Z)-docosahexaenoyl-containing glycerolipid + 2 Fe(III)-[cytochrome b5] + 2 H2O. It carries out the reaction a (7Z,10Z,13Z,16Z)-docosatetraenoyl-containing glycerolipid + 2 Fe(II)-[cytochrome b5] + O2 + 2 H(+) = a (4Z,7Z,10Z,13Z,16Z)-docosapentaenoyl-containing glycerolipid + 2 Fe(III)-[cytochrome b5] + 2 H2O. In terms of biological role, fatty acid desaturase that introduces a cis double bond at the 4-position in 22-carbon polyunsaturated fatty acids that contain a Delta(7) double bond, resulting in the production of delta-4 desaturated fatty acid docosahexanoic acid (DHA). In Rebecca salina (Marine microalga), this protein is Acyl-lipid (7-3)-desaturase.